The primary structure comprises 88 residues: Small ribosomal subunit protein bS20 (88 aa).

Disordered stretches follow at residues 1-25 (MANSPQAKKRARQNERRFAINKARR) and 61-88 (GVTKGVMHKNTAARKMSRLSSRVKALGA).

It belongs to the bacterial ribosomal protein bS20 family.

Binds directly to 16S ribosomal RNA. In Jannaschia sp. (strain CCS1), this protein is Small ribosomal subunit protein bS20.